The following is a 168-amino-acid chain: Small ribosomal subunit protein uS4 (168 aa).

Residues 103–167 form the S4 RNA-binding domain; sequence RRLQTIVYKK…SPFKKSIEEK (65 aa).

It belongs to the universal ribosomal protein uS4 family. As to quaternary structure, part of the 30S ribosomal subunit. Contacts protein S5. The interaction surface between S4 and S5 is involved in control of translational fidelity.

In terms of biological role, one of the primary rRNA binding proteins, it binds directly to 16S rRNA where it nucleates assembly of the body of the 30S subunit. Its function is as follows. With S5 and S12 plays an important role in translational accuracy. This Staphylothermus marinus (strain ATCC 43588 / DSM 3639 / JCM 9404 / F1) protein is Small ribosomal subunit protein uS4.